Reading from the N-terminus, the 343-residue chain is Protein RecA (343 aa).

66–73 (GPESSGKT) contributes to the ATP binding site.

The protein belongs to the RecA family.

The protein resides in the cytoplasm. Its function is as follows. Can catalyze the hydrolysis of ATP in the presence of single-stranded DNA, the ATP-dependent uptake of single-stranded DNA by duplex DNA, and the ATP-dependent hybridization of homologous single-stranded DNAs. It interacts with LexA causing its activation and leading to its autocatalytic cleavage. The sequence is that of Protein RecA from Rickettsia bellii (strain RML369-C).